Here is a 147-residue protein sequence, read N- to C-terminus: Protein BUD31 homolog (147 aa).

The short motif at 8–12 (RRVRK) is the Nuclear localization signal element.

It belongs to the BUD31 (G10) family. In terms of assembly, identified in the spliceosome C complex.

It is found in the nucleus. Involved in pre-mRNA splicing process. This Caenorhabditis elegans protein is Protein BUD31 homolog.